Here is a 725-residue protein sequence, read N- to C-terminus: N-alpha-acetyltransferase 35, NatC auxiliary subunit (725 aa).

Residue serine 187 is modified to Phosphoserine. The tract at residues 548-573 is disordered; it reads ERIMEEQQKGRSSKKTKKKKKVRPLS. The segment covering 558-571 has biased composition (basic residues); it reads RSSKKTKKKKKVRP.

The protein belongs to the MAK10 family. In terms of assembly, component of the N-terminal acetyltransferase C (NatC) complex, which is composed of NAA35, NAA38 and NAA30.

It is found in the cytoplasm. Functionally, auxillary component of the N-terminal acetyltransferase C (NatC) complex which catalyzes acetylation of N-terminal methionine residues. N-terminal acetylation protects proteins from ubiquitination and degradation by the N-end rule pathway. Involved in regulation of apoptosis and proliferation of smooth muscle cells. The chain is N-alpha-acetyltransferase 35, NatC auxiliary subunit (NAA35) from Homo sapiens (Human).